The sequence spans 255 residues: Putative cysteine-rich repeat secretory protein 13 (255 aa).

An N-terminal signal peptide occupies residues 1 to 21 (MSSNILAMVAMQLLLIRIVSS). Gnk2-homologous domains are found at residues 28–136 (YLNH…SVNT) and 142–252 (YDSF…LYPF).

This sequence belongs to the cysteine-rich repeat secretory protein family.

The protein resides in the secreted. In Arabidopsis thaliana (Mouse-ear cress), this protein is Putative cysteine-rich repeat secretory protein 13 (CRRSP13).